The following is a 2005-amino-acid chain: Chitin synthase 8 (2005 aa).

In terms of domain architecture, Myosin motor spans 5-773 (DEVAKLSQLT…AFRELEDELR (769 aa)). 108-115 (GDTSSGKS) lines the ATP pocket. N-linked (GlcNAc...) asparagine glycosylation is found at Asn164, Asn364, Asn390, and Asn546. The segment at 585–631 (QSVKPMRAPSTRRPNRGNTIKRTNTIKKADDDDSDEDAADAADASTS) is disordered. Over residues 615–624 (DDDSDEDAAD) the composition is skewed to acidic residues. The actin-binding stretch occupies residues 647-669 (LDLLLETLEDTKTWFTLCLRPND). The next 2 helical transmembrane spans lie at 929–949 (KWVA…LSRF) and 965–985 (LAIN…IVVL). N-linked (GlcNAc...) asparagine glycosylation is present at Asn1076. Helical transmembrane passes span 1232–1252 (ILLA…LAAL), 1604–1624 (LIFT…IVFI), and 1626–1646 (LLST…IVLV). Asn1650 is a glycosylation site (N-linked (GlcNAc...) asparagine). 2 helical membrane-spanning segments follow: residues 1653 to 1673 (VPLT…VIFL) and 1680 to 1700 (MIGW…FLPL). 2 N-linked (GlcNAc...) asparagine glycosylation sites follow: Asn1770 and Asn1794. The tract at residues 1796 to 1821 (SFGHSPSPSYGGTPSQFGAFAPGPGS) is disordered. Over residues 1797–1811 (FGHSPSPSYGGTPSQ) the composition is skewed to polar residues. N-linked (GlcNAc...) asparagine glycosylation is present at Asn1882. The segment at 1912–1950 (FATAEQQQQQQQQQQAAGLSGSGGSKSPPREAVAGGLPS) is disordered. The segment covering 1917-1930 (QQQQQQQQQQAAGL) has biased composition (low complexity). In terms of domain architecture, DEK-C spans 1948-2003 (LPSDSQIKLDIRSLIAESDLTTITKKQLRAKLEQKYATSIESKKAFINSEIENVLS).

It in the N-terminal section; belongs to the TRAFAC class myosin-kinesin ATPase superfamily. Myosin family. This sequence in the C-terminal section; belongs to the chitin synthase family. Class V subfamily.

The protein resides in the cell membrane. Its subcellular location is the cytoplasmic vesicle membrane. It is found in the cell tip. The enzyme catalyses [(1-&gt;4)-N-acetyl-beta-D-glucosaminyl](n) + UDP-N-acetyl-alpha-D-glucosamine = [(1-&gt;4)-N-acetyl-beta-D-glucosaminyl](n+1) + UDP + H(+). Functionally, polymerizes chitin, a structural polymer of the cell wall and septum, by transferring the sugar moiety of UDP-GlcNAc to the non-reducing end of the growing chitin polymer. Involved in mating tube and dikaryotic hyphae formation and required for the formation of invading hyphae during plant infection. The chain is Chitin synthase 8 from Mycosarcoma maydis (Corn smut fungus).